The chain runs to 488 residues: Probable phenylalanine--tRNA ligase alpha subunit (488 aa).

The contains the major tRNA-Phe binding sites stretch occupies residues 1–146; sequence MSIEQDILNL…KRKLVDINKK (146 aa). L-phenylalanine contacts are provided by residues T315, 363–365, and Y403; that span reads QVE. Position 405 (E405) interacts with Mg(2+). F429 provides a ligand contact to L-phenylalanine.

It belongs to the class-II aminoacyl-tRNA synthetase family. Phe-tRNA synthetase alpha subunit type 2 subfamily. In terms of assembly, tetramer of two alpha and two beta subunits. Requires Mg(2+) as cofactor.

The protein resides in the cytoplasm. The enzyme catalyses tRNA(Phe) + L-phenylalanine + ATP = L-phenylalanyl-tRNA(Phe) + AMP + diphosphate + H(+). The chain is Probable phenylalanine--tRNA ligase alpha subunit from Enterocytozoon bieneusi (strain H348) (Microsporidian parasite).